A 641-amino-acid polypeptide reads, in one-letter code: Tetracycline resistance protein TetS (641 aa).

In terms of domain architecture, tr-type G spans 1–242 (MKIINIGILA…VITSKLFSPT (242 aa)). Residues 10-17 (AHVDAGKT), 74-78 (DTPGH), and 128-131 (NKID) contribute to the GTP site.

It belongs to the TRAFAC class translation factor GTPase superfamily. Classic translation factor GTPase family. TetM/TetO subfamily.

Abolishes the inhibitory effect of tetracyclin on protein synthesis by a non-covalent modification of the ribosomes. The protein is Tetracycline resistance protein TetS (tetS) of Listeria monocytogenes.